The following is a 497-amino-acid chain: Probable malate:quinone oxidoreductase (497 aa).

This sequence belongs to the MQO family. FAD is required as a cofactor.

It catalyses the reaction (S)-malate + a quinone = a quinol + oxaloacetate. The protein operates within carbohydrate metabolism; tricarboxylic acid cycle; oxaloacetate from (S)-malate (quinone route): step 1/1. In Tolumonas auensis (strain DSM 9187 / NBRC 110442 / TA 4), this protein is Probable malate:quinone oxidoreductase.